Consider the following 519-residue polypeptide: Lysine 5,6-aminomutase alpha subunit (519 aa).

57–59 (DEV) is an adenosylcob(III)alamin binding site. Residues 187–192 (RTTGQS), serine 241, tyrosine 266, arginine 271, and asparagine 302 contribute to the pyridoxal 5'-phosphate site.

Belongs to the KamD family. In terms of assembly, heterotetramer of 2 alpha and 2 beta subunits. Requires adenosylcob(III)alamin as cofactor. Pyridoxal 5'-phosphate is required as a cofactor.

The catalysed reaction is (3S)-3,6-diaminohexanoate = (3S,5S)-3,5-diaminohexanoate. It catalyses the reaction D-lysine = (2R,5S)-2,5-diaminohexanoate. It functions in the pathway amino-acid metabolism; lysine degradation. With respect to regulation, rapidly inactivated in the presence of D-lysine and to a lesser extent in the absence of adenosylcobalamin (Adocbl). Activity is stable in the presence of Adocbl when D-lysine is absent. Adocbl imparts thermal stability at 37 degrees Celsius. In terms of biological role, catalyzes the migration of the L-beta-lysine and D-lysine epsilon amino group to the delta carbon to produce 3,5-diaminohexanoate and 2,5-diaminohexanoate, respectively. The polypeptide is Lysine 5,6-aminomutase alpha subunit (kamD) (Acetoanaerobium sticklandii (strain ATCC 12662 / DSM 519 / JCM 1433 / CCUG 9281 / NCIMB 10654 / HF) (Clostridium sticklandii)).